The sequence spans 332 residues: L-lactate dehydrogenase A chain (332 aa).

The residue at position 2 (alanine 2) is an N-acetylalanine. Lysine 5 carries the N6-acetyllysine; alternate modification. An N6-succinyllysine; alternate modification is found at lysine 5. A Phosphotyrosine modification is found at tyrosine 10. The residue at position 14 (lysine 14) is an N6-acetyllysine. Residue threonine 18 is modified to Phosphothreonine. Residue 29-57 (GAVGMACAISILMKDLADELALVDVIEDK) coordinates NAD(+). The residue at position 57 (lysine 57) is an N6-acetyllysine; alternate. Lysine 57 participates in a covalent cross-link: Glycyl lysine isopeptide (Lys-Gly) (interchain with G-Cter in SUMO2); alternate. Position 81 is an N6-acetyllysine (lysine 81). Residue arginine 99 participates in NAD(+) binding. Arginine 106 is a substrate binding site. Position 118 is an N6-acetyllysine; alternate (lysine 118). Lysine 118 is subject to N6-succinyllysine; alternate. Lysine 126 carries the post-translational modification N6-acetyllysine. Residue asparagine 138 coordinates NAD(+). The substrate site is built by asparagine 138 and arginine 169. Catalysis depends on histidine 193, which acts as the Proton acceptor. 2 positions are modified to N6-acetyllysine: lysine 224 and lysine 232. Tyrosine 239 carries the phosphotyrosine modification. Lysine 243 carries the post-translational modification N6-acetyllysine. Threonine 248 lines the substrate pocket. Threonine 309 bears the Phosphothreonine mark. Serine 310 carries the phosphoserine modification. Lysine 318 is modified (N6-acetyllysine; alternate). N6-succinyllysine; alternate is present on lysine 318. Phosphothreonine is present on threonine 322.

The protein belongs to the LDH/MDH superfamily. LDH family. Homotetramer. Interacts with PTEN upstream reading frame protein MP31. Interacts with folliculin FLCN; the interaction is direct and inhibits enzymatic activity. ISGylated. As to expression, predominantly expressed in anaerobic tissues such as skeletal muscle and liver.

It is found in the cytoplasm. It carries out the reaction (S)-lactate + NAD(+) = pyruvate + NADH + H(+). The protein operates within fermentation; pyruvate fermentation to lactate; (S)-lactate from pyruvate: step 1/1. Fermentation of pyruvate to lactate is inhibited when bound to folliculin FLCN, perhaps partly by FLCN preventing binding of cofactor NADH. Its function is as follows. Interconverts simultaneously and stereospecifically pyruvate and lactate with concomitant interconversion of NADH and NAD(+). The protein is L-lactate dehydrogenase A chain of Homo sapiens (Human).